The primary structure comprises 187 residues: Elongation factor P (187 aa).

This sequence belongs to the elongation factor P family.

It localises to the cytoplasm. It functions in the pathway protein biosynthesis; polypeptide chain elongation. Its function is as follows. Involved in peptide bond synthesis. Stimulates efficient translation and peptide-bond synthesis on native or reconstituted 70S ribosomes in vitro. Probably functions indirectly by altering the affinity of the ribosome for aminoacyl-tRNA, thus increasing their reactivity as acceptors for peptidyl transferase. The sequence is that of Elongation factor P from Frankia casuarinae (strain DSM 45818 / CECT 9043 / HFP020203 / CcI3).